Here is a 553-residue protein sequence, read N- to C-terminus: MAASTSGYSGVLFRLRKYANKSQSLCHIGNSNFIIRTTWTTGCKHQHQLNTQIESLPQMVGVVGLEIHAQIHSKSKLFSGSHVSFSDPPNSLVSHFDASLPGTLPVLNRRCVEAAVLTGLALNCTINKKSLFDRKHYFYADMPAGYQITQQRLPIAVNGTLSYSHFEGRKRNHVVTKSVKIKQIQLEQDSGKSLHDDERSQTLIDLNRAGVGLMELVMEPEMCCGEEAGAAVRELQLILQALGTCQANMAEGQLRVDANVSVHHPGEPLGVRTEVKNINSVRHLAKAIDYEIQRQMEVLQSGGTVLNETRAFDSKSGITIPMRDKEGLQDYRFMPEPNLPPLFVYESEASVPAGADSTQLVLIDRLSSQLPELPSVTRTRLVETYGILREHSFTLVNEDGLVDYFESVVKMTKTEPRKVIGWVMNELMGNLNLQNLKVSQSPVSPCALAEMINLVRSGHISSSTAKKVFQEMWKTPEKTVEQIVKEQDLWMINDKEELRQICQRIVDSHSEEVQIIRGGNKKVLNKLMGEIQKETKGKTNPLQVKAILEEMIF.

Residues 1–18 constitute a mitochondrion transit peptide; that stretch reads MAASTSGYSGVLFRLRKY.

This sequence belongs to the GatB/GatE family. GatB subfamily. As to quaternary structure, subunit of the heterotrimeric GatCAB amidotransferase (AdT) complex, composed of A (qrsl1), B (gatb) and C (gatc) subunits.

The protein localises to the mitochondrion. It carries out the reaction L-glutamyl-tRNA(Gln) + L-glutamine + ATP + H2O = L-glutaminyl-tRNA(Gln) + L-glutamate + ADP + phosphate + H(+). Its function is as follows. Allows the formation of correctly charged Gln-tRNA(Gln) through the transamidation of misacylated Glu-tRNA(Gln) in the mitochondria. The reaction takes place in the presence of glutamine and ATP through an activated gamma-phospho-Glu-tRNA(Gln). In Danio rerio (Zebrafish), this protein is Glutamyl-tRNA(Gln) amidotransferase subunit B, mitochondrial.